An 82-amino-acid chain; its full sequence is Cytochrome b559 subunit alpha (82 aa).

Residues 22–36 traverse the membrane as a helical segment; it reads VIHAVTLPSIFLAGY. His-24 is a heme binding site.

Belongs to the PsbE/PsbF family. In terms of assembly, heterodimer of an alpha subunit and a beta subunit. PSII is composed of 1 copy each of membrane proteins PsbA, PsbB, PsbC, PsbD, PsbE, PsbF, PsbH, PsbI, PsbJ, PsbK, PsbL, PsbM, PsbT, PsbX, PsbY, Psb30/Ycf12, peripheral proteins PsbO, CyanoQ (PsbQ), PsbU, PsbV and a large number of cofactors. It forms dimeric complexes. Requires heme b as cofactor.

The protein localises to the cellular thylakoid membrane. Functionally, this b-type cytochrome is tightly associated with the reaction center of photosystem II (PSII). PSII is a light-driven water:plastoquinone oxidoreductase that uses light energy to abstract electrons from H(2)O, generating O(2) and a proton gradient subsequently used for ATP formation. It consists of a core antenna complex that captures photons, and an electron transfer chain that converts photonic excitation into a charge separation. In Prochlorococcus marinus (strain MIT 9303), this protein is Cytochrome b559 subunit alpha.